A 323-amino-acid chain; its full sequence is Prenyl transferase (323 aa).

Lys46, Arg49, and His81 together coordinate isopentenyl diphosphate. Mg(2+) is bound by residues Asp88 and Asp92. Arg97 lines the an all-trans-polyprenyl diphosphate pocket. Position 98 (Arg98) interacts with isopentenyl diphosphate. 3 residues coordinate an all-trans-polyprenyl diphosphate: Lys174, Thr175, and Gln212.

This sequence belongs to the FPP/GGPP synthase family. It depends on Mg(2+) as a cofactor.

The protein localises to the plastid. Its subcellular location is the chloroplast. In terms of biological role, possible role in synthesis of the nonaprenyl side chain of plastoquinone or in synthesis of other prenyl chains such as undekaprenyl pyrophosphate. The polypeptide is Prenyl transferase (preA) (Cyanidium caldarium (Red alga)).